Consider the following 275-residue polypeptide: Release factor glutamine methyltransferase (275 aa).

Residues 114–118, Asp137, Trp165, and Asn180 contribute to the S-adenosyl-L-methionine site; that span reads GTGSG. 180–183 lines the substrate pocket; the sequence is NPPY.

The protein belongs to the protein N5-glutamine methyltransferase family. PrmC subfamily.

It catalyses the reaction L-glutaminyl-[peptide chain release factor] + S-adenosyl-L-methionine = N(5)-methyl-L-glutaminyl-[peptide chain release factor] + S-adenosyl-L-homocysteine + H(+). In terms of biological role, methylates the class 1 translation termination release factors RF1/PrfA and RF2/PrfB on the glutamine residue of the universally conserved GGQ motif. The protein is Release factor glutamine methyltransferase of Xylella fastidiosa (strain 9a5c).